Consider the following 276-residue polypeptide: Hemin import ATP-binding protein HmuV (276 aa).

One can recognise an ABC transporter domain in the interval 2 to 259; that stretch reads LTAHHLDVAR…AHIAQCYGFA (258 aa). 34–41 is an ATP binding site; it reads GRNGAGKS.

Belongs to the ABC transporter superfamily. Heme (hemin) importer (TC 3.A.1.14.5) family. As to quaternary structure, the complex is composed of two ATP-binding proteins (HmuV), two transmembrane proteins (HmuU) and a solute-binding protein (HmuT).

The protein resides in the cell inner membrane. Part of the ABC transporter complex HmuTUV involved in hemin import. Responsible for energy coupling to the transport system. The chain is Hemin import ATP-binding protein HmuV from Burkholderia cenocepacia (strain HI2424).